Here is a 196-residue protein sequence, read N- to C-terminus: Large ribosomal subunit protein uL18 (196 aa).

This sequence belongs to the universal ribosomal protein uL18 family. As to quaternary structure, part of the 50S ribosomal subunit. Contacts the 5S and 23S rRNAs.

Its function is as follows. This is one of the proteins that bind and probably mediate the attachment of the 5S RNA into the large ribosomal subunit, where it forms part of the central protuberance. This chain is Large ribosomal subunit protein uL18, found in Thermofilum pendens (strain DSM 2475 / Hrk 5).